Here is a 1359-residue protein sequence, read N- to C-terminus: Nuclear protein STH1/NPS1 (1359 aa).

Ser-38 is modified (phosphoserine). One can recognise an HSA domain in the interval 307 to 383 (LERQQLLEKR…AKQRLAALKS (77 aa)). The 166-residue stretch at 482 to 647 (VSLYNNHLNG…WALLNFVLPK (166 aa)) folds into the Helicase ATP-binding domain. An ATP-binding site is contributed by 495–502 (DEMGLGKT). Positions 597–600 (DEGH) match the DEGH box motif. In terms of domain architecture, Helicase C-terminal spans 795–956 (LLDRVLPKFK…NKSTAEEQEA (162 aa)). Residues 1090–1246 (RERRRLRQNG…TAAKKTKTKS (157 aa)) are disordered. Residues 1108-1126 (LENTPEASETSLIENNSFT) are compositionally biased toward polar residues. Composition is skewed to basic residues over residues 1143-1154 (RSKRRSSRKKRT) and 1198-1210 (KKKKPKLTVKIKL). A compositionally biased stretch (basic and acidic residues) spans 1219–1232 (NDGKRAEEKPESKS). Residues 1233–1246 (PAKKTAAKKTKTKS) show a composition bias toward basic residues. The region spanning 1257–1357 (KLVEEMREQL…EFTDEWFKEH (101 aa)) is the Bromo domain.

Belongs to the SNF2/RAD54 helicase family. Interacts directly with SFH1, CSE4, histones H3, H4 and H2B, and via its N-terminus, with RSC8. Interacts with LDB7, NPL6 and RTT102. Component of the two forms of the RSC complex composed of at least either RSC1 or RSC2, and ARP7, ARP9, LDB7, NPL6, RSC3, RSC30, RSC4, RSC58, RSC6, RSC8, RSC9, SFH1, STH1, HTL1 and probably RTT102. The complexes interact with histone and histone variant components of centromeric chromatin.

Its subcellular location is the nucleus. The catalysed reaction is ATP + H2O = ADP + phosphate + H(+). Functionally, catalytic component of the chromatin structure-remodeling complex (RSC), which is involved in transcription regulation and nucleosome positioning. RSC is responsible for the transfer of a histone octamer from a nucleosome core particle to naked DNA. The reaction requires ATP and involves an activated RSC-nucleosome intermediate. Remodeling reaction also involves DNA translocation, DNA twist and conformational change. As a reconfigurer of centromeric and flanking nucleosomes, RSC complex is required both for proper kinetochore function in chromosome segregation and, via a PKC1-dependent signaling pathway, for organization of the cellular cytoskeleton. This subunit is the essential ATPase of the complex. It is a DNA translocase capable of nucleosome remodeling. Required for full expression of early meiotic genes. Essential for mitotic growth and repression of CHA1 expression. Also involved in G2 phase control. The polypeptide is Nuclear protein STH1/NPS1 (STH1) (Saccharomyces cerevisiae (strain ATCC 204508 / S288c) (Baker's yeast)).